We begin with the raw amino-acid sequence, 433 residues long: Tol-Pal system protein TolB (433 aa).

The signal sequence occupies residues 1-21 (MIKRLRGLLVLLCCVAGMAMA).

The protein belongs to the TolB family. In terms of assembly, the Tol-Pal system is composed of five core proteins: the inner membrane proteins TolA, TolQ and TolR, the periplasmic protein TolB and the outer membrane protein Pal. They form a network linking the inner and outer membranes and the peptidoglycan layer.

It is found in the periplasm. Part of the Tol-Pal system, which plays a role in outer membrane invagination during cell division and is important for maintaining outer membrane integrity. The polypeptide is Tol-Pal system protein TolB (Pseudomonas entomophila (strain L48)).